Here is a 241-residue protein sequence, read N- to C-terminus: Cysteine-rich secretory protein 3 (241 aa).

The N-terminal stretch at 1-19 (MALMLVLFFLAAVLPPSLL) is a signal peptide. The 127-residue stretch at 44 to 170 (SKHNQLRRKV…PLRYFYVCRY (127 aa)) folds into the SCP domain. Asn-118, Asn-132, and Asn-175 each carry an N-linked (GlcNAc...) asparagine glycan. 5 cysteine pairs are disulfide-bonded: Cys-194–Cys-201, Cys-197–Cys-206, Cys-210–Cys-241, Cys-219–Cys-235, and Cys-226–Cys-239. In terms of domain architecture, ShKT spans 210-241 (CQYKDMSFWCKRLEYVCKHPGLKKRCLATCQC).

It belongs to the CRISP family. Interacts with A1BG. Interacts with KNG1 isoform LMW. As to expression, expressed in submandibular gland.

Its subcellular location is the cytoplasmic vesicle. The protein localises to the secretory vesicle. This protein is supposed to help spermatozoa undergo functional maturation while they move from the testis to the ductus deferens. This chain is Cysteine-rich secretory protein 3 (Crisp3), found in Mus musculus (Mouse).